We begin with the raw amino-acid sequence, 320 residues long: Reticulocalbin-2 (320 aa).

The first 25 residues, 1–25 (MRLGPRPAVLGLLLLLLLYAAVAGA), serve as a signal peptide directing secretion. EF-hand domains lie at 64–99 (EQQR…SFKH) and 100–135 (YAMQ…RVID). Ca(2+) contacts are provided by D77, D79, D81, E88, D113, N115, D117, T119, and E124. At T140 the chain carries Phosphothreonine. EF-hand domains follow at residues 150–185 (FRQL…HPEE), 189–224 (MTEF…DPTA), 230–265 (WILV…NNQG), and 266–301 (IAQE…FLTS). Ca(2+) contacts are provided by D167, E176, D202, N204, D206, E213, D243, D245, D247, R249, E254, D279, N281, D283, K285, and E290. Residues 317–320 (HDEL) carry the Prevents secretion from ER motif.

The protein belongs to the CREC family. Binds the snake venom phospholipase complex taipoxin. In terms of tissue distribution, ubiquitous.

The protein resides in the endoplasmic reticulum lumen. Functionally, not known. Binds calcium. The polypeptide is Reticulocalbin-2 (Rcn2) (Rattus norvegicus (Rat)).